A 313-amino-acid polypeptide reads, in one-letter code: Ribosomal RNA small subunit methyltransferase H (313 aa).

S-adenosyl-L-methionine is bound by residues G35–H37, D55, F79, D101, and Q108.

The protein belongs to the methyltransferase superfamily. RsmH family.

The protein resides in the cytoplasm. The enzyme catalyses cytidine(1402) in 16S rRNA + S-adenosyl-L-methionine = N(4)-methylcytidine(1402) in 16S rRNA + S-adenosyl-L-homocysteine + H(+). Its function is as follows. Specifically methylates the N4 position of cytidine in position 1402 (C1402) of 16S rRNA. The polypeptide is Ribosomal RNA small subunit methyltransferase H (Salmonella newport (strain SL254)).